Consider the following 150-residue polypeptide: Dual specificity protein phosphatase 23 (150 aa).

One can recognise a Tyrosine-protein phosphatase domain in the interval 7–150 (NFSWVLPGRL…AVFQFYQRTK (144 aa)). Cysteine 95 (phosphocysteine intermediate) is an active-site residue.

It belongs to the protein-tyrosine phosphatase family. Non-receptor class dual specificity subfamily. Widely expressed. Highly expressed in spleen, prostate, colon, adrenal gland, mammary gland, thyroid and trachea. Expressed at lower level in uterus, small intestine, bladder, bone marrow, brain, spinal cord and stomach.

It localises to the cytoplasm. It is found in the cytosol. Its subcellular location is the nucleus. It catalyses the reaction O-phospho-L-tyrosyl-[protein] + H2O = L-tyrosyl-[protein] + phosphate. The enzyme catalyses O-phospho-L-seryl-[protein] + H2O = L-seryl-[protein] + phosphate. It carries out the reaction O-phospho-L-threonyl-[protein] + H2O = L-threonyl-[protein] + phosphate. Functionally, protein phosphatase that mediates dephosphorylation of proteins phosphorylated on Tyr and Ser/Thr residues. In vitro, it can dephosphorylate p44-ERK1 (MAPK3) but not p54 SAPK-beta (MAPK10) in vitro. Able to enhance activation of JNK and p38 (MAPK14). This Homo sapiens (Human) protein is Dual specificity protein phosphatase 23 (DUSP23).